Here is a 508-residue protein sequence, read N- to C-terminus: Photosystem II CP47 reaction center protein (508 aa).

The next 6 membrane-spanning stretches (helical) occupy residues 21–36 (SVHI…WAGS), 101–115 (IVFS…IWHW), 140–156 (GIHL…FGAF), 203–218 (IAAG…FHLS), 237–252 (VLSS…AFVV), and 457–472 (SFAL…HGAR).

It belongs to the PsbB/PsbC family. PsbB subfamily. PSII is composed of 1 copy each of membrane proteins PsbA, PsbB, PsbC, PsbD, PsbE, PsbF, PsbH, PsbI, PsbJ, PsbK, PsbL, PsbM, PsbT, PsbX, PsbY, PsbZ, Psb30/Ycf12, at least 3 peripheral proteins of the oxygen-evolving complex and a large number of cofactors. It forms dimeric complexes. Binds multiple chlorophylls. PSII binds additional chlorophylls, carotenoids and specific lipids. is required as a cofactor.

The protein resides in the plastid. The protein localises to the chloroplast thylakoid membrane. One of the components of the core complex of photosystem II (PSII). It binds chlorophyll and helps catalyze the primary light-induced photochemical processes of PSII. PSII is a light-driven water:plastoquinone oxidoreductase, using light energy to abstract electrons from H(2)O, generating O(2) and a proton gradient subsequently used for ATP formation. The polypeptide is Photosystem II CP47 reaction center protein (Arabis hirsuta (Hairy rock-cress)).